A 56-amino-acid chain; its full sequence is Large ribosomal subunit protein bL33 (56 aa).

It belongs to the bacterial ribosomal protein bL33 family.

In Rickettsia typhi (strain ATCC VR-144 / Wilmington), this protein is Large ribosomal subunit protein bL33.